Here is a 527-residue protein sequence, read N- to C-terminus: NAD(P)H-quinone oxidoreductase chain 4 1 (527 aa).

A run of 13 helical transmembrane segments spans residues 6-26 (FPWLTAIILFPIVAALLVPII), 36-56 (WFALTVGLIDFALIIYAFYSS), 91-111 (LIILTGFITTLAILAAWPVTF), 113-133 (PKLFYFLMLLMYGGQIAVFAV), 136-156 (LLLFFLVWELELVPVYLILSI), 169-189 (FILYTAGGSLFILVAALTMAF), 212-232 (LFLYAGFLIAYGVKLPIFPLH), 243-263 (TAPAHMLLAGILLKMGGYALL), 275-295 (AVFAPVLVILGVVNIIYAALT), 306-326 (IAYSSISHMGFVLIGMASFTD), 331-351 (GAMLQMISHGLIGASLFFMVG), 387-407 (LALPGMSGFVAELMVFIGFAT), and 417-437 (VIIVFLAAIGVILTPIYLLSM).

Belongs to the complex I subunit 4 family.

The protein localises to the cellular thylakoid membrane. It catalyses the reaction a plastoquinone + NADH + (n+1) H(+)(in) = a plastoquinol + NAD(+) + n H(+)(out). The catalysed reaction is a plastoquinone + NADPH + (n+1) H(+)(in) = a plastoquinol + NADP(+) + n H(+)(out). Functionally, NDH-1 shuttles electrons from NAD(P)H, via FMN and iron-sulfur (Fe-S) centers, to quinones in the respiratory chain. The immediate electron acceptor for the enzyme in this species is believed to be plastoquinone. Couples the redox reaction to proton translocation (for every two electrons transferred, four hydrogen ions are translocated across the cytoplasmic membrane), and thus conserves the redox energy in a proton gradient. The chain is NAD(P)H-quinone oxidoreductase chain 4 1 from Microcystis aeruginosa (strain NIES-843 / IAM M-2473).